The chain runs to 84 residues: N.vectensis toxin 5 (84 aa).

The N-terminal stretch at 1–21 (MNSLLKVAVVCLVMLVACSSG) is a signal peptide. 3 disulfide bridges follow: Cys-45/Cys-77, Cys-47/Cys-68, and Cys-61/Cys-78.

As to expression, expressed in ectodermal gland cells. In adult female tissues, highly transcribed in mesenteries (gametes-producing tissue) and slightly transcribed in tentacles, pharynx and physa.

Its function is as follows. Has toxic effects on zebrafish larvae. It causes contractile paralysis and twitching of the tail within 20 minutes, followed by death within 30 minutes. Does not show any toxicity when injected into arthropods (cherry shrimps or grass shrimps). The polypeptide is N.vectensis toxin 5 (Nematostella vectensis (Starlet sea anemone)).